The primary structure comprises 119 residues: NADH-quinone oxidoreductase subunit A (119 aa).

3 consecutive transmembrane segments (helical) span residues 7-27 (FPVLLFLIVGTGLGVALVSIG), 63-83 (LVAILFIIFDLETAFLFPWGV), and 88-108 (IGWPGFMAMMIFLLEFLLGFA).

The protein belongs to the complex I subunit 3 family. As to quaternary structure, NDH-1 is composed of 14 different subunits. Subunits NuoA, H, J, K, L, M, N constitute the membrane sector of the complex.

The protein localises to the cell inner membrane. The catalysed reaction is a quinone + NADH + 5 H(+)(in) = a quinol + NAD(+) + 4 H(+)(out). Functionally, NDH-1 shuttles electrons from NADH, via FMN and iron-sulfur (Fe-S) centers, to quinones in the respiratory chain. The immediate electron acceptor for the enzyme in this species is believed to be ubiquinone. Couples the redox reaction to proton translocation (for every two electrons transferred, four hydrogen ions are translocated across the cytoplasmic membrane), and thus conserves the redox energy in a proton gradient. The chain is NADH-quinone oxidoreductase subunit A from Paraburkholderia xenovorans (strain LB400).